The following is a 166-amino-acid chain: CDP-archaeol synthase (166 aa).

Transmembrane regions (helical) follow at residues 7–27, 55–75, 78–98, 116–136, and 138–158; these read LLLSILIYLPAFVANGSGPFI, LIVALTFGTTVGVIISKFFTA, TLISFLESLFAMIGDMIGAFI, LDFVLGASLILVLMRVNITWY, and FLFICGLAFFLHQGTNYVAYL.

This sequence belongs to the CDP-archaeol synthase family. Mg(2+) is required as a cofactor.

Its subcellular location is the cell membrane. It catalyses the reaction 2,3-bis-O-(geranylgeranyl)-sn-glycerol 1-phosphate + CTP + H(+) = CDP-2,3-bis-O-(geranylgeranyl)-sn-glycerol + diphosphate. It functions in the pathway membrane lipid metabolism; glycerophospholipid metabolism. In terms of biological role, catalyzes the formation of CDP-2,3-bis-(O-geranylgeranyl)-sn-glycerol (CDP-archaeol) from 2,3-bis-(O-geranylgeranyl)-sn-glycerol 1-phosphate (DGGGP) and CTP. This reaction is the third ether-bond-formation step in the biosynthesis of archaeal membrane lipids. The protein is CDP-archaeol synthase of Saccharolobus islandicus (strain L.S.2.15 / Lassen #1) (Sulfolobus islandicus).